Reading from the N-terminus, the 182-residue chain is Bifunctional protein PyrR (182 aa).

Residues 99 to 111 carry the PRPP-binding motif; that stretch reads VVLVDDVLFTGRT.

This sequence belongs to the purine/pyrimidine phosphoribosyltransferase family. PyrR subfamily.

The enzyme catalyses UMP + diphosphate = 5-phospho-alpha-D-ribose 1-diphosphate + uracil. Its function is as follows. Regulates the transcription of the pyrimidine nucleotide (pyr) operon in response to exogenous pyrimidines. Also displays a weak uracil phosphoribosyltransferase activity which is not physiologically significant. This chain is Bifunctional protein PyrR, found in Chloroflexus aurantiacus (strain ATCC 29366 / DSM 635 / J-10-fl).